A 125-amino-acid polypeptide reads, in one-letter code: S-adenosylmethionine decarboxylase proenzyme (125 aa).

Catalysis depends on S71, which acts as the Schiff-base intermediate with substrate; via pyruvic acid. S71 carries the pyruvic acid (Ser); by autocatalysis modification. Residue H76 is the Proton acceptor; for processing activity of the active site. C91 functions as the Proton donor; for catalytic activity in the catalytic mechanism.

It belongs to the prokaryotic AdoMetDC family. Type 1 subfamily. Heterotetramer of two alpha and two beta chains arranged as a dimer of alpha/beta heterodimers. It depends on pyruvate as a cofactor. Post-translationally, is synthesized initially as an inactive proenzyme. Formation of the active enzyme involves a self-maturation process in which the active site pyruvoyl group is generated from an internal serine residue via an autocatalytic post-translational modification. Two non-identical subunits are generated from the proenzyme in this reaction, and the pyruvate is formed at the N-terminus of the alpha chain, which is derived from the carboxyl end of the proenzyme. The post-translation cleavage follows an unusual pathway, termed non-hydrolytic serinolysis, in which the side chain hydroxyl group of the serine supplies its oxygen atom to form the C-terminus of the beta chain, while the remainder of the serine residue undergoes an oxidative deamination to produce ammonia and the pyruvoyl group blocking the N-terminus of the alpha chain.

The enzyme catalyses S-adenosyl-L-methionine + H(+) = S-adenosyl 3-(methylsulfanyl)propylamine + CO2. It participates in amine and polyamine biosynthesis; S-adenosylmethioninamine biosynthesis; S-adenosylmethioninamine from S-adenosyl-L-methionine: step 1/1. Catalyzes the decarboxylation of S-adenosylmethionine to S-adenosylmethioninamine (dcAdoMet), the propylamine donor required for the synthesis of the polyamines spermine and spermidine from the diamine putrescine. This Pyrobaculum arsenaticum (strain DSM 13514 / JCM 11321 / PZ6) protein is S-adenosylmethionine decarboxylase proenzyme.